We begin with the raw amino-acid sequence, 444 residues long: Elongation factor 1-alpha (444 aa).

Residues 15 to 236 (KPHINLAVVG…VLDTFQPPPR (222 aa)) enclose the tr-type G domain. A G1 region spans residues 24–31 (GHVDNGKS). 24–31 (GHVDNGKS) lines the GTP pocket. Ser-31 provides a ligand contact to Mg(2+). A G2 region spans residues 80 to 84 (GVTIE). The segment at 101–104 (DLPG) is G3. GTP contacts are provided by residues 101–105 (DLPGH) and 163–166 (NKMD). A G4 region spans residues 163 to 166 (NKMD). Positions 202-204 (SAI) are G5.

The protein belongs to the TRAFAC class translation factor GTPase superfamily. Classic translation factor GTPase family. EF-Tu/EF-1A subfamily.

It is found in the cytoplasm. The catalysed reaction is GTP + H2O = GDP + phosphate + H(+). In terms of biological role, GTP hydrolase that promotes the GTP-dependent binding of aminoacyl-tRNA to the A-site of ribosomes during protein biosynthesis. The sequence is that of Elongation factor 1-alpha from Pyrobaculum calidifontis (strain DSM 21063 / JCM 11548 / VA1).